A 769-amino-acid polypeptide reads, in one-letter code: Endothelin-converting enzyme 1 (769 aa).

At Met1–Arg67 the chain is on the cytoplasmic side. Thr24 carries the phosphothreonine modification. The helical; Signal-anchor for type II membrane protein transmembrane segment at Leu68–Ile88 threads the bilayer. The Extracellular portion of the chain corresponds to Gln89–Trp769. In terms of domain architecture, Peptidase M13 spans Val97–Trp769. 5 disulfides stabilise this stretch: Cys98–Cys103, Cys121–Cys754, Cys129–Cys714, Cys184–Cys434, and Cys643–Cys766. N-linked (GlcNAc...) asparagine glycosylation is found at Asn165, Asn186, Asn209, Asn269, Asn315, Asn361, Asn382, and Asn538. Zn(2+) is bound at residue His606. Glu607 is a catalytic residue. His610 contacts Zn(2+). N-linked (GlcNAc...) asparagine glycosylation is found at Asn631 and Asn650. Position 666 (Glu666) interacts with Zn(2+). Asp670 (proton donor) is an active-site residue.

Belongs to the peptidase M13 family. In terms of assembly, homodimer; disulfide-linked. Interacts with PPP1R16B. Interacts with TSPAN8; this interaction recruits the endothelin converting enzyme ECE1 to tetraspanin-enriched microdomains and positively modulates its enzymatic activity. It depends on Zn(2+) as a cofactor.

Its subcellular location is the cell membrane. It carries out the reaction Hydrolysis of the 21-Trp-|-Val-22 bond in big endothelin to form endothelin 1.. With respect to regulation, inhibited by phosphoramidon. Functionally, converts big endothelin-1 to endothelin-1. This Mus musculus (Mouse) protein is Endothelin-converting enzyme 1 (Ece1).